Reading from the N-terminus, the 165-residue chain is 2-C-methyl-D-erythritol 2,4-cyclodiphosphate synthase (165 aa).

2 residues coordinate a divalent metal cation: aspartate 13 and histidine 15. 4-CDP-2-C-methyl-D-erythritol 2-phosphate contacts are provided by residues aspartate 13 to histidine 15 and histidine 39 to serine 40. Histidine 47 lines the a divalent metal cation pocket. 4-CDP-2-C-methyl-D-erythritol 2-phosphate-binding positions include aspartate 61–glycine 63 and phenylalanine 141.

It belongs to the IspF family. Homotrimer. The cofactor is a divalent metal cation.

It catalyses the reaction 4-CDP-2-C-methyl-D-erythritol 2-phosphate = 2-C-methyl-D-erythritol 2,4-cyclic diphosphate + CMP. The protein operates within isoprenoid biosynthesis; isopentenyl diphosphate biosynthesis via DXP pathway; isopentenyl diphosphate from 1-deoxy-D-xylulose 5-phosphate: step 4/6. Its function is as follows. Involved in the biosynthesis of isopentenyl diphosphate (IPP) and dimethylallyl diphosphate (DMAPP), two major building blocks of isoprenoid compounds. Catalyzes the conversion of 4-diphosphocytidyl-2-C-methyl-D-erythritol 2-phosphate (CDP-ME2P) to 2-C-methyl-D-erythritol 2,4-cyclodiphosphate (ME-CPP) with a corresponding release of cytidine 5-monophosphate (CMP). This chain is 2-C-methyl-D-erythritol 2,4-cyclodiphosphate synthase, found in Thermotoga neapolitana (strain ATCC 49049 / DSM 4359 / NBRC 107923 / NS-E).